The chain runs to 913 residues: Rab GTPase-activating protein tbc-8 (913 aa).

The disordered stretch occupies residues 1-24 (MQMFRHSSADMWRAKKPTLERRST). Residues 106 to 240 (NLNSPYVTSL…TYRRMSNRIE (135 aa)) form the RUN domain. The 248-residue stretch at 597–844 (INTKEVRRMA…KVWEVIWAAQ (248 aa)) folds into the Rab-GAP TBC domain.

Belongs to the RUTBC family. In terms of assembly, interacts with rab-19. Interacts with ric-19; the interaction is direct and may be required for the activation of rab-2 and dense vesicle maturation in cholinergic motoneurons. Interacts (via RUN domain) with rund-1. Does not interact with unc-108 (GTP-bound form). In terms of tissue distribution, expressed in neurons in the head, tail and ventral nerve cord (at protein level).

Its subcellular location is the golgi apparatus. It localises to the trans-Golgi network. The protein localises to the early endosome. It is found in the cytoplasmic vesicle membrane. Functionally, interacts with numerous Rab family members, functioning as Rab effector for some, and as GTPase activator for others. GTPase activator for rab-2. In association with ric-19 activates rab-2 during dense core vesicle maturation in cholinergic motoneurons. This is Rab GTPase-activating protein tbc-8 from Caenorhabditis elegans.